The sequence spans 274 residues: Rhamnulose-1-phosphate aldolase (274 aa).

E117 is a catalytic residue. Positions 141, 143, and 212 each coordinate Zn(2+).

It belongs to the aldolase class II family. RhaD subfamily. In terms of assembly, homotetramer. The cofactor is Zn(2+).

The protein localises to the cytoplasm. The enzyme catalyses L-rhamnulose 1-phosphate = (S)-lactaldehyde + dihydroxyacetone phosphate. Its pathway is carbohydrate degradation; L-rhamnose degradation; glycerone phosphate from L-rhamnose: step 3/3. In terms of biological role, catalyzes the reversible cleavage of L-rhamnulose-1-phosphate to dihydroxyacetone phosphate (DHAP) and L-lactaldehyde. This Escherichia coli (strain SE11) protein is Rhamnulose-1-phosphate aldolase.